Consider the following 103-residue polypeptide: uncharacterized protein (103 aa).

2 stretches are compositionally biased toward polar residues: residues 1–10 (MSNSCSTSSY) and 18–28 (TRSGSNVNRNY). Residues 1–28 (MSNSCSTSSYPIRRKTPTRSGSNVNRNY) form a disordered region.

This is an uncharacterized protein from Acanthamoeba polyphaga mimivirus (APMV).